Reading from the N-terminus, the 401-residue chain is MAGATVTVEEVRKAQRATGPATVLAIGTATPANCVHQADYPDYYFRITKSEHMTELKEKFKRMCDKSQIRKRYMHLTEEYLAENPNMCAYMAPSLDARQDIVVVEVPKLGKAAAQKAIKEWGQPKSKITHLVFCTTSGVDMPGADYQLTKMLGLRPSVNRLMMYQQGCFAGGTVLRVAKDLAENNRGARVLVVCSEITAVTFRGPSESHLDSMVGQALFGDGAAAVIVGADPDERVERPLFQLVSASQRILPDSEGAIDGHLREVGLTFHLLKDVPGLISKNIERALEEAFKPLGITDYNSIFWVAHPGGPAILDQVEAKVGLEKERMRATRHVLSEYGNMSSACVLFILDEMRKRSAEDGQTTTGEGFDWGVLFGFGPGLTVETVVLHSVPITTGAAITA.

Cys168 is an active-site residue.

It belongs to the thiolase-like superfamily. Chalcone/stilbene synthases family.

It catalyses the reaction (E)-4-coumaroyl-CoA + 3 malonyl-CoA + 3 H(+) = 2',4,4',6'-tetrahydroxychalcone + 3 CO2 + 4 CoA. It participates in secondary metabolite biosynthesis; flavonoid biosynthesis. Its function is as follows. The primary product of this enzyme is 4,2',4',6'-tetrahydroxychalcone (also termed naringenin-chalcone or chalcone) which can under specific conditions spontaneously isomerize into naringenin. This is Chalcone synthase 1 (CHS1) from Sorghum bicolor (Sorghum).